Consider the following 392-residue polypeptide: Galactokinase (392 aa).

Substrate is bound at residue E33 to D36. ATP contacts are provided by residues S67 and G129–S135. S135 and E167 together coordinate Mg(2+). Residue D179 is the Proton acceptor of the active site. Y229 serves as a coordination point for substrate.

Belongs to the GHMP kinase family. GalK subfamily.

It localises to the cytoplasm. The enzyme catalyses alpha-D-galactose + ATP = alpha-D-galactose 1-phosphate + ADP + H(+). The protein operates within carbohydrate metabolism; galactose metabolism. Functionally, catalyzes the transfer of the gamma-phosphate of ATP to D-galactose to form alpha-D-galactose-1-phosphate (Gal-1-P). This chain is Galactokinase, found in Limosilactobacillus reuteri (strain DSM 20016) (Lactobacillus reuteri).